A 629-amino-acid chain; its full sequence is Phosphomethylpyrimidine synthase (629 aa).

Residues 1-13 (MTTKSKNAINLSD) are compositionally biased toward polar residues. The tract at residues 1–22 (MTTKSKNAINLSDSAKVDEQSV) is disordered. Residues Asn233, Met262, Tyr291, His327, 347-349 (SRG), 388-391 (DGLR), and Glu427 contribute to the substrate site. His431 contacts Zn(2+). Tyr454 serves as a coordination point for substrate. His495 is a binding site for Zn(2+). The [4Fe-4S] cluster site is built by Cys575, Cys578, and Cys583.

The protein belongs to the ThiC family. As to quaternary structure, homodimer. The cofactor is [4Fe-4S] cluster.

The catalysed reaction is 5-amino-1-(5-phospho-beta-D-ribosyl)imidazole + S-adenosyl-L-methionine = 4-amino-2-methyl-5-(phosphooxymethyl)pyrimidine + CO + 5'-deoxyadenosine + formate + L-methionine + 3 H(+). Its pathway is cofactor biosynthesis; thiamine diphosphate biosynthesis. In terms of biological role, catalyzes the synthesis of the hydroxymethylpyrimidine phosphate (HMP-P) moiety of thiamine from aminoimidazole ribotide (AIR) in a radical S-adenosyl-L-methionine (SAM)-dependent reaction. The chain is Phosphomethylpyrimidine synthase from Pseudomonas fluorescens (strain Pf0-1).